Here is a 418-residue protein sequence, read N- to C-terminus: Tyrosine--tRNA ligase (418 aa).

Tyr-38 contributes to the L-tyrosine binding site. The 'HIGH' region motif lies at 43 to 52 (CTAKSLHVGS). The L-tyrosine site is built by Tyr-175 and Gln-179. A 'KMSKS' region motif is present at residues 235–239 (KMGKT). An ATP-binding site is contributed by Lys-238. An S4 RNA-binding domain is found at 348–413 (LPIIKLLQIS…CGKKRHLKIM (66 aa)).

Belongs to the class-I aminoacyl-tRNA synthetase family. TyrS type 1 subfamily. As to quaternary structure, homodimer.

The protein resides in the cytoplasm. The enzyme catalyses tRNA(Tyr) + L-tyrosine + ATP = L-tyrosyl-tRNA(Tyr) + AMP + diphosphate + H(+). Its function is as follows. Catalyzes the attachment of tyrosine to tRNA(Tyr) in a two-step reaction: tyrosine is first activated by ATP to form Tyr-AMP and then transferred to the acceptor end of tRNA(Tyr). The polypeptide is Tyrosine--tRNA ligase (Ehrlichia canis (strain Jake)).